The primary structure comprises 467 residues: Transcriptional modulator WTM2 (467 aa).

A compositionally biased stretch (low complexity) spans 1–12 (MAKSKSSQGASG). 2 disordered regions span residues 1 to 22 (MAKSKSSQGASGARRKPAPSLY) and 84 to 121 (TFYDDDDDDDNDDDDEEGNGKTKSAATPNPEYGDAFQD). A compositionally biased stretch (acidic residues) spans 87–100 (DDDDDDDNDDDDEE). 3 WD repeats span residues 244-282 (PGTNVAHSVRFFNNHLFASCSDDNILRFWDTRTADKPLW), 287-327 (PKNG…LATT), and 349-389 (SGGD…SRND).

Transcriptional modulator with roles in meiotic regulation and silencing. In Saccharomyces cerevisiae (strain ATCC 204508 / S288c) (Baker's yeast), this protein is Transcriptional modulator WTM2 (WTM2).